The sequence spans 237 residues: Orotidine 5'-phosphate decarboxylase (237 aa).

Substrate-binding positions include D17, K39, 66–75 (DLKLHDIGNT), T121, R182, Q191, G211, and R212. K68 functions as the Proton donor in the catalytic mechanism.

This sequence belongs to the OMP decarboxylase family. Type 1 subfamily. As to quaternary structure, homodimer.

The enzyme catalyses orotidine 5'-phosphate + H(+) = UMP + CO2. It participates in pyrimidine metabolism; UMP biosynthesis via de novo pathway; UMP from orotate: step 2/2. In terms of biological role, catalyzes the decarboxylation of orotidine 5'-monophosphate (OMP) to uridine 5'-monophosphate (UMP). In Bradyrhizobium diazoefficiens (strain JCM 10833 / BCRC 13528 / IAM 13628 / NBRC 14792 / USDA 110), this protein is Orotidine 5'-phosphate decarboxylase.